Reading from the N-terminus, the 287-residue chain is Ethylene-inducing xylanase 3 (287 aa).

A signal peptide spans 1–19 (MVCFSSLFVAASAIAVVFA). Positions 31–219 (QSTPSSQGTH…SSGSARINVA (189 aa)) constitute a GH11 domain. E115 functions as the Nucleophile in the catalytic mechanism. The active-site Proton donor is the E206. The 36-residue stretch at 252–287 (SCAARWGQCGGSGWNGATCCSAGTCQAQNQWYSQCL) folds into the CBM1 domain.

The protein belongs to the glycosyl hydrolase 11 (cellulase G) family.

The enzyme catalyses Endohydrolysis of (1-&gt;4)-beta-D-xylosidic linkages in xylans.. The protein operates within glycan degradation; xylan degradation. Endo-1,4-beta-xylanase involved in the hydrolysis of xylan, a major structural heterogeneous polysaccharide found in plant biomass representing the second most abundant polysaccharide in the biosphere, after cellulose. Exhibits immunity-inducing activity and induces cell death in Nicotiana benthamiana. The polypeptide is Ethylene-inducing xylanase 3 (Verticillium longisporum (Verticillium dahliae var. longisporum)).